Consider the following 308-residue polypeptide: Oligopeptide transport ATP-binding protein AmiF (308 aa).

The 246-residue stretch at 6 to 251 (VEIKDLEISF…PIHPYTQALL (246 aa)) folds into the ABC transporter domain. An ATP-binding site is contributed by 42–49 (GESGSGKT).

The protein belongs to the ABC transporter superfamily.

The protein localises to the cell membrane. In terms of biological role, part of the binding-protein-dependent transport system for oligopeptides. Probably responsible for energy coupling to the transport system. The sequence is that of Oligopeptide transport ATP-binding protein AmiF (amiF) from Streptococcus pneumoniae serotype 4 (strain ATCC BAA-334 / TIGR4).